Here is a 214-residue protein sequence, read N- to C-terminus: Protein-L-isoaspartate O-methyltransferase (214 aa).

S63 is an active-site residue.

Belongs to the methyltransferase superfamily. L-isoaspartyl/D-aspartyl protein methyltransferase family.

The protein localises to the cytoplasm. It catalyses the reaction [protein]-L-isoaspartate + S-adenosyl-L-methionine = [protein]-L-isoaspartate alpha-methyl ester + S-adenosyl-L-homocysteine. Its function is as follows. Catalyzes the methyl esterification of L-isoaspartyl residues in peptides and proteins that result from spontaneous decomposition of normal L-aspartyl and L-asparaginyl residues. It plays a role in the repair and/or degradation of damaged proteins. This chain is Protein-L-isoaspartate O-methyltransferase, found in Desulfotalea psychrophila (strain LSv54 / DSM 12343).